The following is a 227-amino-acid chain: Cytochrome c oxidase subunit 2 (227 aa).

At 1–14 (MAHAAQVGLQDATS) the chain is on the mitochondrial intermembrane side. The helical transmembrane segment at 15–45 (PIMEELVIFHDHALMIIFLICFLVLYALFLT) threads the bilayer. The Mitochondrial matrix portion of the chain corresponds to 46–59 (LTTKLTNTSISDAQ). The chain crosses the membrane as a helical span at residues 60–87 (EMETIWTILPAIILILIALPSLRILYLT). At 88-227 (DEINDPSFTI…IFEMGPVFTL (140 aa)) the chain is on the mitochondrial intermembrane side. Cu cation is bound by residues His161, Cys196, Glu198, Cys200, His204, and Met207. Glu198 serves as a coordination point for Mg(2+).

The protein belongs to the cytochrome c oxidase subunit 2 family. Component of the cytochrome c oxidase (complex IV, CIV), a multisubunit enzyme composed of 14 subunits. The complex is composed of a catalytic core of 3 subunits MT-CO1, MT-CO2 and MT-CO3, encoded in the mitochondrial DNA, and 11 supernumerary subunits COX4I, COX5A, COX5B, COX6A, COX6B, COX6C, COX7A, COX7B, COX7C, COX8 and NDUFA4, which are encoded in the nuclear genome. The complex exists as a monomer or a dimer and forms supercomplexes (SCs) in the inner mitochondrial membrane with NADH-ubiquinone oxidoreductase (complex I, CI) and ubiquinol-cytochrome c oxidoreductase (cytochrome b-c1 complex, complex III, CIII), resulting in different assemblies (supercomplex SCI(1)III(2)IV(1) and megacomplex MCI(2)III(2)IV(2)). Found in a complex with TMEM177, COA6, COX18, COX20, SCO1 and SCO2. Interacts with TMEM177 in a COX20-dependent manner. Interacts with COX20. Interacts with COX16. Cu cation is required as a cofactor.

It localises to the mitochondrion inner membrane. It catalyses the reaction 4 Fe(II)-[cytochrome c] + O2 + 8 H(+)(in) = 4 Fe(III)-[cytochrome c] + 2 H2O + 4 H(+)(out). Functionally, component of the cytochrome c oxidase, the last enzyme in the mitochondrial electron transport chain which drives oxidative phosphorylation. The respiratory chain contains 3 multisubunit complexes succinate dehydrogenase (complex II, CII), ubiquinol-cytochrome c oxidoreductase (cytochrome b-c1 complex, complex III, CIII) and cytochrome c oxidase (complex IV, CIV), that cooperate to transfer electrons derived from NADH and succinate to molecular oxygen, creating an electrochemical gradient over the inner membrane that drives transmembrane transport and the ATP synthase. Cytochrome c oxidase is the component of the respiratory chain that catalyzes the reduction of oxygen to water. Electrons originating from reduced cytochrome c in the intermembrane space (IMS) are transferred via the dinuclear copper A center (CU(A)) of subunit 2 and heme A of subunit 1 to the active site in subunit 1, a binuclear center (BNC) formed by heme A3 and copper B (CU(B)). The BNC reduces molecular oxygen to 2 water molecules using 4 electrons from cytochrome c in the IMS and 4 protons from the mitochondrial matrix. The protein is Cytochrome c oxidase subunit 2 (MT-CO2) of Pongo abelii (Sumatran orangutan).